The primary structure comprises 650 residues: Aminopeptidase B (650 aa).

Ala2 is modified (N-acetylalanine). Ser7 bears the Phosphoserine mark. A substrate-binding site is contributed by 298 to 302 (GGMEN). His325 is a Zn(2+) binding site. Glu326 functions as the Proton acceptor in the catalytic mechanism. 2 residues coordinate Zn(2+): His329 and Glu348. At Lys446 the chain carries N6-acetyllysine.

The protein belongs to the peptidase M1 family. Zn(2+) serves as cofactor.

The protein resides in the secreted. It catalyses the reaction Release of N-terminal Arg and Lys from oligopeptides when P1' is not Pro. Also acts on arylamides of Arg and Lys.. Its function is as follows. Exopeptidase which selectively removes arginine and/or lysine residues from the N-terminus of several peptide substrates including Arg(0)-Leu-enkephalin, Arg(0)-Met-enkephalin and Arg(-1)-Lys(0)-somatostatin-14. Can hydrolyze leukotriene A4 (LTA-4) into leukotriene B4 (LTB-4). This chain is Aminopeptidase B (RNPEP), found in Homo sapiens (Human).